Consider the following 638-residue polypeptide: Bifunctional protein glk (638 aa).

A disordered region spans residues 1–20 (MSTGVQTKAAPGAGQHADGP). The interval 1 to 341 (MSTGVQTKAA…QLSNRAGGSS (341 aa)) is glucokinase. 24–29 (ADIGGT) provides a ligand contact to ATP. The region spanning 342–418 (SAVFERIRQM…LKLATGLTGT (77 aa)) is the HTH rpiR-type domain. Positions 342-638 (SAVFERIRQM…SHGAASSARD (297 aa)) are putative HTH-type transcriptional regulator. The segment at residues 378–397 (IVDIARKADVSQPTVIRFCR) is a DNA-binding region (H-T-H motif). Residues 462–601 (AIDLLNGARR…AVGVAIRRAV (140 aa)) enclose the SIS domain.

This sequence in the N-terminal section; belongs to the bacterial glucokinase family.

Its subcellular location is the cytoplasm. It carries out the reaction D-glucose + ATP = D-glucose 6-phosphate + ADP + H(+). The sequence is that of Bifunctional protein glk (glk) from Paraburkholderia xenovorans (strain LB400).